A 261-amino-acid polypeptide reads, in one-letter code: Cytochrome c oxidase subunit 3 (261 aa).

The Mitochondrial matrix segment spans residues M1–P15. A helical membrane pass occupies residues W16–W34. Residues F35 to T40 lie on the Mitochondrial intermembrane side of the membrane. A helical transmembrane segment spans residues A41–T66. At Y67 to T72 the chain is on the mitochondrial matrix side. The helical transmembrane segment at T73–S105 threads the bilayer. Residues L106–E128 lie on the Mitochondrial intermembrane side of the membrane. The helical transmembrane segment at V129–M152 threads the bilayer. Residues N153 to N155 lie on the Mitochondrial matrix side of the membrane. The chain crosses the membrane as a helical span at residues R156–E183. The Mitochondrial intermembrane portion of the chain corresponds to A184–D190. The helical transmembrane segment at G191–L223 threads the bilayer. The Mitochondrial matrix portion of the chain corresponds to F224–H232. A helical membrane pass occupies residues F233–I256. At Y257–S261 the chain is on the mitochondrial intermembrane side.

The protein belongs to the cytochrome c oxidase subunit 3 family. Component of the cytochrome c oxidase (complex IV, CIV), a multisubunit enzyme composed of 14 subunits. The complex is composed of a catalytic core of 3 subunits MT-CO1, MT-CO2 and MT-CO3, encoded in the mitochondrial DNA, and 11 supernumerary subunits COX4I, COX5A, COX5B, COX6A, COX6B, COX6C, COX7A, COX7B, COX7C, COX8 and NDUFA4, which are encoded in the nuclear genome. The complex exists as a monomer or a dimer and forms supercomplexes (SCs) in the inner mitochondrial membrane with NADH-ubiquinone oxidoreductase (complex I, CI) and ubiquinol-cytochrome c oxidoreductase (cytochrome b-c1 complex, complex III, CIII), resulting in different assemblies (supercomplex SCI(1)III(2)IV(1) and megacomplex MCI(2)III(2)IV(2)).

The protein resides in the mitochondrion inner membrane. It catalyses the reaction 4 Fe(II)-[cytochrome c] + O2 + 8 H(+)(in) = 4 Fe(III)-[cytochrome c] + 2 H2O + 4 H(+)(out). Its function is as follows. Component of the cytochrome c oxidase, the last enzyme in the mitochondrial electron transport chain which drives oxidative phosphorylation. The respiratory chain contains 3 multisubunit complexes succinate dehydrogenase (complex II, CII), ubiquinol-cytochrome c oxidoreductase (cytochrome b-c1 complex, complex III, CIII) and cytochrome c oxidase (complex IV, CIV), that cooperate to transfer electrons derived from NADH and succinate to molecular oxygen, creating an electrochemical gradient over the inner membrane that drives transmembrane transport and the ATP synthase. Cytochrome c oxidase is the component of the respiratory chain that catalyzes the reduction of oxygen to water. Electrons originating from reduced cytochrome c in the intermembrane space (IMS) are transferred via the dinuclear copper A center (CU(A)) of subunit 2 and heme A of subunit 1 to the active site in subunit 1, a binuclear center (BNC) formed by heme A3 and copper B (CU(B)). The BNC reduces molecular oxygen to 2 water molecules using 4 electrons from cytochrome c in the IMS and 4 protons from the mitochondrial matrix. The chain is Cytochrome c oxidase subunit 3 (MT-CO3) from Papio hamadryas (Hamadryas baboon).